The sequence spans 424 residues: UDP-N-acetylglucosamine 1-carboxyvinyltransferase (424 aa).

22–23 (KN) provides a ligand contact to phosphoenolpyruvate. Arg-93 lines the UDP-N-acetyl-alpha-D-glucosamine pocket. Cys-117 functions as the Proton donor in the catalytic mechanism. The residue at position 117 (Cys-117) is a 2-(S-cysteinyl)pyruvic acid O-phosphothioketal. Residues 122 to 126 (RPIDL), Asp-307, and Val-329 each bind UDP-N-acetyl-alpha-D-glucosamine.

Belongs to the EPSP synthase family. MurA subfamily.

Its subcellular location is the cytoplasm. It carries out the reaction phosphoenolpyruvate + UDP-N-acetyl-alpha-D-glucosamine = UDP-N-acetyl-3-O-(1-carboxyvinyl)-alpha-D-glucosamine + phosphate. It participates in cell wall biogenesis; peptidoglycan biosynthesis. Its function is as follows. Cell wall formation. Adds enolpyruvyl to UDP-N-acetylglucosamine. This is UDP-N-acetylglucosamine 1-carboxyvinyltransferase from Chlorobium limicola (strain DSM 245 / NBRC 103803 / 6330).